We begin with the raw amino-acid sequence, 123 residues long: Phosphoribosyl-AMP cyclohydrolase (123 aa).

A Mg(2+)-binding site is contributed by Asp76. Zn(2+) is bound at residue Cys77. The Mg(2+) site is built by Asp78 and Asp80. Residues Cys93 and Cys100 each contribute to the Zn(2+) site.

Belongs to the PRA-CH family. Homodimer. Mg(2+) serves as cofactor. The cofactor is Zn(2+).

Its subcellular location is the cytoplasm. It catalyses the reaction 1-(5-phospho-beta-D-ribosyl)-5'-AMP + H2O = 1-(5-phospho-beta-D-ribosyl)-5-[(5-phospho-beta-D-ribosylamino)methylideneamino]imidazole-4-carboxamide. Its pathway is amino-acid biosynthesis; L-histidine biosynthesis; L-histidine from 5-phospho-alpha-D-ribose 1-diphosphate: step 3/9. Catalyzes the hydrolysis of the adenine ring of phosphoribosyl-AMP. This chain is Phosphoribosyl-AMP cyclohydrolase, found in Methanocorpusculum labreanum (strain ATCC 43576 / DSM 4855 / Z).